The following is a 100-amino-acid chain: Large ribosomal subunit protein uL23c (100 aa).

It belongs to the universal ribosomal protein uL23 family. As to quaternary structure, part of the 50S ribosomal subunit.

Its subcellular location is the plastid. The protein resides in the chloroplast. Functionally, binds to 23S rRNA. This Euglena gracilis protein is Large ribosomal subunit protein uL23c (rpl23).